Consider the following 133-residue polypeptide: Putative N-acetylgalactosamine permease IIC component 2 (133 aa).

Residues 1–2 are Cytoplasmic-facing; sequence ME. Residues 1–133 form the PTS EIIC type-4 domain; sequence MEISLLQAFA…CDLATNPRRI (133 aa). The chain crosses the membrane as a helical span at residues 3 to 23; that stretch reads ISLLQAFALGIIAFIAGLDMF. Over 24–32 the chain is Periplasmic; that stretch reads NGLTHMHRP. Residues 33–53 traverse the membrane as a helical segment; it reads VVLGPLVGLVLGDLHTGILTG. The Cytoplasmic segment spans residues 54–65; it reads GTLELVWMGLAP. Residues 66-86 traverse the membrane as a helical segment; the sequence is LAGAQPPNVIIGTIVGTAFAI. Over 87–93 the chain is Periplasmic; it reads TTGVKPD. The helical transmembrane segment at 94 to 114 threads the bilayer; it reads VAVGVAVPFAVAVQMGITFLF. Residues 115–133 are Cytoplasmic-facing; it reads SVMSGVMSRCDLATNPRRI.

It localises to the cell inner membrane. The phosphoenolpyruvate-dependent sugar phosphotransferase system (PTS), a major carbohydrate active -transport system, catalyzes the phosphorylation of incoming sugar substrates concomitant with their translocation across the cell membrane. This system is involved in N-acetylgalactosamine transport. The sequence is that of Putative N-acetylgalactosamine permease IIC component 2 (agaW) from Escherichia coli (strain K12).